The chain runs to 520 residues: RNA-binding protein MEX3A (520 aa).

Residues 49-111 (GLGEPPAPTA…QPPTAPKGAS (63 aa)) form a disordered region. The segment covering 60 to 69 (EDGGGGGGGA) has biased composition (gly residues). The span at 73-91 (PAAPPQPAPPPPPAAPPAA) shows a compositional bias: pro residues. KH domains lie at 132-193 (TTEC…RREI) and 223-284 (QVTI…REEI). The residue at position 338 (S338) is a Phosphoserine. A disordered region spans residues 412–461 (SSSSAKARAGPPGAHRSPATSAGPELAGLPRRPPGEPLQGFSKLGGGGLR). The residue at position 462 (S462) is a Phosphoserine. The RING-type zinc finger occupies 469–509 (CMVCFESEVTAALVPCGHNLFCMECAVRICERTDPECPVCH).

Post-translationally, phosphorylated. In terms of tissue distribution, highest levels found in fetal brain and testis. Detected also in thymus, salivary gland and uterus.

The protein resides in the cytoplasm. It is found in the nucleus. The protein localises to the P-body. RNA binding protein, may be involved in post-transcriptional regulatory mechanisms. The sequence is that of RNA-binding protein MEX3A (MEX3A) from Homo sapiens (Human).